Here is an 853-residue protein sequence, read N- to C-terminus: DNA mismatch repair protein MutS (853 aa).

614–621 lines the ATP pocket; sequence GPNMGGKS.

The protein belongs to the DNA mismatch repair MutS family.

In terms of biological role, this protein is involved in the repair of mismatches in DNA. It is possible that it carries out the mismatch recognition step. This protein has a weak ATPase activity. This chain is DNA mismatch repair protein MutS, found in Escherichia coli O1:K1 / APEC.